The primary structure comprises 690 residues: MAKKKSEEQSSADANDSDYQEEPNFEDPPGFVDNISDEDLLGDMLAQRPSEADGVESVVVVDNIPKVEPVRLEKLKSVINKLFSNYGDIVNVVYPVDEEGKTKGYAFMEYKQASQAEEAVKKLNNHRLDKNHTFAVNLFTDFQKYENIPEKWEPPTVQTFKVQSDLYNFINDPDTYDQYCVAAETAPNCVQVGFWQNVLPEPFELETRERFTDTFVKWSPLGTYVVTFHKPGVAIWGGSSFQKIQKFPHPGTQFVEFSPCENYLVTYGPTPTGQKIIIWDIRTGAEKRSFVADGMSVLSMFRWSHDDKFVARMGENSIHIYETPSFYLLDLKSIKIPGIRGFSWSPTDNVIAYWVEEQNQIPARVTLMEIPKKREIRNKNLFHVADCKLHWQKSGDYLCVKVDRYSKLKKDKKDLDVKFLGMFYNFEIFHMREKEIPVDSVEIRELILAFAWEPIGNKFSIIHGETNSSNVSFYEVNKGVKPSLVKRLEKKSCTHLFWSPRGQFIVMANLTMGTFEFVDSTNDYIITSSPDHFRASEVEWDPTGRYVVTGVSSWKVKEDTGFNMYTFQGRIIKRTILKNFVQFLWRPRPPTLLSEEKQKEIKKNLKKYYAAFEQKDRLRLTRASKELLEKRSQLRETFMEYRNKRIAEWADQKSRRIMLRGHVDTDNLETDEVDEEIVEFLVKEEVTLLE.

The tract at residues 1-37 (MAKKKSEEQSSADANDSDYQEEPNFEDPPGFVDNISD) is disordered. Residues 15–25 (NDSDYQEEPNF) show a composition bias toward acidic residues. Residues 57–141 (SVVVVDNIPK…HTFAVNLFTD (85 aa)) enclose the RRM domain. WD repeat units follow at residues 207-246 (TRER…KIQK), 293-331 (DGMS…LLDL), 334-369 (IKIP…TLME), 442-484 (EIRE…KPSL), and 530-575 (PDHF…IKRT). Residues 595 to 645 (EEKQKEIKKNLKKYYAAFEQKDRLRLTRASKELLEKRSQLRETFMEYRNKR) are a coiled coil.

It belongs to the eIF-3 subunit B family. In terms of assembly, component of the eukaryotic translation initiation factor 3 (eIF-3) complex. The eIF-3 complex interacts with pix. Interacts with mxt.

It localises to the cytoplasm. RNA-binding component of the eukaryotic translation initiation factor 3 (eIF-3) complex, which is involved in protein synthesis of a specialized repertoire of mRNAs and, together with other initiation factors, stimulates binding of mRNA and methionyl-tRNAi to the 40S ribosome. The eIF-3 complex specifically targets and initiates translation of a subset of mRNAs involved in cell proliferation. The polypeptide is Eukaryotic translation initiation factor 3 subunit B (Drosophila sechellia (Fruit fly)).